Reading from the N-terminus, the 254-residue chain is MLLAIDVGNTNIVLGIFAGHELKCHWRVASDRQKTADEYGLILRQLAHYQGLDLKEIQGVVLASVVPTLTQVLTEMITKQLGHQPLVIGPGVKTGMPIRFENPREVGADRIVNGVAVYELYGGPAIVVDFGTATTFDAISEKGEYLGGAIAPGIGIATDALFARAAKLPRVELVRPPRLIGKNTVACMQAGIMYGFIGQVEGIITRMQAEMGGKAIVVATGGLAGLIGPEVNCIDRVDPMLTLEGLRIVYERNT.

6 to 13 is a binding site for ATP; that stretch reads DVGNTNIV. Residues F100 and 107–110 contribute to the substrate site; that span reads GADR. Residue D109 is the Proton acceptor of the active site. D129 lines the K(+) pocket. Residue T132 coordinates ATP. T184 serves as a coordination point for substrate.

It belongs to the type III pantothenate kinase family. Homodimer. NH4(+) serves as cofactor. It depends on K(+) as a cofactor.

It localises to the cytoplasm. It catalyses the reaction (R)-pantothenate + ATP = (R)-4'-phosphopantothenate + ADP + H(+). It functions in the pathway cofactor biosynthesis; coenzyme A biosynthesis; CoA from (R)-pantothenate: step 1/5. Its function is as follows. Catalyzes the phosphorylation of pantothenate (Pan), the first step in CoA biosynthesis. This is Type III pantothenate kinase from Moorella thermoacetica (strain ATCC 39073 / JCM 9320).